The following is a 188-amino-acid chain: Ion-translocating oxidoreductase complex subunit B (188 aa).

The segment at 1–26 (MNGVFLAIGALLPICLAGGALLGYAA) is hydrophobic. Positions 32–90 (QGDPVAEQVNALLPQTQCGQCGYPGCKPYAEAIAAGDKINKCPPGGEATIRALADLLDL) constitute a 4Fe-4S domain. Residues cysteine 49, cysteine 52, cysteine 57, cysteine 73, cysteine 113, cysteine 116, cysteine 119, cysteine 123, cysteine 143, cysteine 146, cysteine 149, and cysteine 153 each coordinate [4Fe-4S] cluster. 4Fe-4S ferredoxin-type domains lie at 104–133 (RVAY…GAAR) and 134–163 (LMHT…MRET).

It belongs to the 4Fe4S bacterial-type ferredoxin family. RnfB subfamily. The complex is composed of six subunits: RnfA, RnfB, RnfC, RnfD, RnfE and RnfG. [4Fe-4S] cluster is required as a cofactor.

It is found in the cell inner membrane. Functionally, part of a membrane-bound complex that couples electron transfer with translocation of ions across the membrane. The sequence is that of Ion-translocating oxidoreductase complex subunit B from Pseudomonas aeruginosa (strain UCBPP-PA14).